A 113-amino-acid polypeptide reads, in one-letter code: Hydrogenase maturation factor HypA (113 aa).

Histidine 2 provides a ligand contact to Ni(2+). Cysteine 73, cysteine 76, cysteine 89, and cysteine 92 together coordinate Zn(2+).

Belongs to the HypA/HybF family.

Involved in the maturation of [NiFe] hydrogenases. Required for nickel insertion into the metal center of the hydrogenase. The chain is Hydrogenase maturation factor HypA from Rhodopseudomonas palustris (strain BisB5).